Consider the following 188-residue polypeptide: GMP synthase [glutamine-hydrolyzing] subunit A (188 aa).

The Glutamine amidotransferase type-1 domain maps to 1–188 (MIVIMDNGGQ…RNFAELCGEL (188 aa)). Cysteine 78 (nucleophile) is an active-site residue. Residues histidine 165 and glutamate 167 contribute to the active site.

Heterodimer composed of a glutamine amidotransferase subunit (A) and a GMP-binding subunit (B).

The catalysed reaction is XMP + L-glutamine + ATP + H2O = GMP + L-glutamate + AMP + diphosphate + 2 H(+). It participates in purine metabolism; GMP biosynthesis; GMP from XMP (L-Gln route): step 1/1. Its function is as follows. Catalyzes the synthesis of GMP from XMP. The protein is GMP synthase [glutamine-hydrolyzing] subunit A of Thermococcus kodakarensis (strain ATCC BAA-918 / JCM 12380 / KOD1) (Pyrococcus kodakaraensis (strain KOD1)).